The sequence spans 697 residues: DNA ligase (697 aa).

NAD(+)-binding positions include 36–40, 85–86, and Glu123; these read DAEYD and SL. The active-site N6-AMP-lysine intermediate is the Lys125. The NAD(+) site is built by Arg146, Glu182, Lys320, and Lys344. Zn(2+)-binding residues include Cys438, Cys441, Cys456, and Cys462. Residues 619–697 enclose the BRCT domain; that stretch reads PQGNTLAGKT…EDGLKALLGV (79 aa).

Belongs to the NAD-dependent DNA ligase family. LigA subfamily. Mg(2+) serves as cofactor. Requires Mn(2+) as cofactor.

The catalysed reaction is NAD(+) + (deoxyribonucleotide)n-3'-hydroxyl + 5'-phospho-(deoxyribonucleotide)m = (deoxyribonucleotide)n+m + AMP + beta-nicotinamide D-nucleotide.. In terms of biological role, DNA ligase that catalyzes the formation of phosphodiester linkages between 5'-phosphoryl and 3'-hydroxyl groups in double-stranded DNA using NAD as a coenzyme and as the energy source for the reaction. It is essential for DNA replication and repair of damaged DNA. The chain is DNA ligase from Bordetella petrii (strain ATCC BAA-461 / DSM 12804 / CCUG 43448).